A 437-amino-acid polypeptide reads, in one-letter code: tRNA wybutosine-synthesizing protein 2 homolog (437 aa).

Residues S208, K215, E255, and 283-284 (DN) contribute to the S-adenosyl-L-methionine site. The span at 331–344 (SFSGKNPQPPGSSN) shows a compositional bias: polar residues. Positions 331-374 (SFSGKNPQPPGSSNMEKKHWPHPQKITTDKQGNRTTGSCMGEMS) are disordered.

The protein belongs to the class I-like SAM-binding methyltransferase superfamily. TRM5/TYW2 family.

It carries out the reaction 4-demethylwyosine(37) in tRNA(Phe) + S-adenosyl-L-methionine = 4-demethyl-7-[(3S)-3-amino-3-carboxypropyl]wyosine(37) in tRNA(Phe) + S-methyl-5'-thioadenosine + H(+). It participates in tRNA modification; wybutosine-tRNA(Phe) biosynthesis. Its function is as follows. S-adenosyl-L-methionine-dependent transferase that acts as a component of the wybutosine biosynthesis pathway. Wybutosine is a hyper modified guanosine with a tricyclic base found at the 3'-position adjacent to the anticodon of eukaryotic phenylalanine tRNA. Catalyzes the transfer of the alpha-amino-alpha-carboxypropyl (acp) group from S-adenosyl-L-methionine to the C-7 position of 4-demethylwyosine (imG-14) to produce wybutosine-86. The protein is tRNA wybutosine-synthesizing protein 2 homolog (Trmt12) of Rattus norvegicus (Rat).